Reading from the N-terminus, the 119-residue chain is Ribonuclease P protein component (119 aa).

The segment at M1–K20 is disordered.

It belongs to the RnpA family. As to quaternary structure, consists of a catalytic RNA component (M1 or rnpB) and a protein subunit.

The enzyme catalyses Endonucleolytic cleavage of RNA, removing 5'-extranucleotides from tRNA precursor.. In terms of biological role, RNaseP catalyzes the removal of the 5'-leader sequence from pre-tRNA to produce the mature 5'-terminus. It can also cleave other RNA substrates such as 4.5S RNA. The protein component plays an auxiliary but essential role in vivo by binding to the 5'-leader sequence and broadening the substrate specificity of the ribozyme. The sequence is that of Ribonuclease P protein component from Mycolicibacterium vanbaalenii (strain DSM 7251 / JCM 13017 / BCRC 16820 / KCTC 9966 / NRRL B-24157 / PYR-1) (Mycobacterium vanbaalenii).